The following is a 180-amino-acid chain: Protein GrpE (180 aa).

Residues 1 to 25 are disordered; the sequence is MSKKKAEDKQPIIKDEAVEEPKSDS.

The protein belongs to the GrpE family. In terms of assembly, homodimer.

Its subcellular location is the cytoplasm. Its function is as follows. Participates actively in the response to hyperosmotic and heat shock by preventing the aggregation of stress-denatured proteins, in association with DnaK and GrpE. It is the nucleotide exchange factor for DnaK and may function as a thermosensor. Unfolded proteins bind initially to DnaJ; upon interaction with the DnaJ-bound protein, DnaK hydrolyzes its bound ATP, resulting in the formation of a stable complex. GrpE releases ADP from DnaK; ATP binding to DnaK triggers the release of the substrate protein, thus completing the reaction cycle. Several rounds of ATP-dependent interactions between DnaJ, DnaK and GrpE are required for fully efficient folding. In Fructilactobacillus sanfranciscensis (Lactobacillus sanfranciscensis), this protein is Protein GrpE.